Reading from the N-terminus, the 124-residue chain is Small ribosomal subunit protein bS6 (124 aa).

Residues 96–124 (ETGPSPMMKEVQREEAKKAAAAQPAEAQA) form a disordered region. Low complexity predominate over residues 114–124 (AAAAQPAEAQA).

The protein belongs to the bacterial ribosomal protein bS6 family.

In terms of biological role, binds together with bS18 to 16S ribosomal RNA. The protein is Small ribosomal subunit protein bS6 of Burkholderia orbicola (strain AU 1054).